Consider the following 173-residue polypeptide: Small ribosomal subunit protein uS5 (173 aa).

The 64-residue stretch at Trp17 to Val80 folds into the S5 DRBM domain.

The protein belongs to the universal ribosomal protein uS5 family. Part of the 30S ribosomal subunit. Contacts proteins S4 and S8.

In terms of biological role, with S4 and S12 plays an important role in translational accuracy. Located at the back of the 30S subunit body where it stabilizes the conformation of the head with respect to the body. This is Small ribosomal subunit protein uS5 from Gloeothece citriformis (strain PCC 7424) (Cyanothece sp. (strain PCC 7424)).